We begin with the raw amino-acid sequence, 483 residues long: Iroquois-class homeodomain protein IRX-5 (483 aa).

A DNA-binding region (homeobox; TALE-type) is located at residues 113–175 (DPAYRKNATR…NARRRLKKEN (63 aa)). Disordered stretches follow at residues 177–392 (MTWT…QCPF) and 423–442 (GHPG…FNGL). Residues 186–203 (EDEEEEENIDLEKNDEDE) show a composition bias toward acidic residues. Basic and acidic residues-rich tracts occupy residues 204 to 213 (PQKPEDKGDP) and 250 to 261 (SDFKEPPSEGRL). Composition is skewed to low complexity over residues 266-282 (GPPR…AAAR) and 374-388 (SRAS…SPSA). At Ser274 the chain carries Phosphoserine. The residue at position 464 (Ser464) is a Phosphoserine.

This sequence belongs to the TALE/IRO homeobox family.

The protein resides in the nucleus. Establishes the cardiac repolarization gradient by its repressive actions on the KCND2 potassium-channel gene. Required for retinal cone bipolar cell differentiation. May regulate contrast adaptation in the retina and control specific aspects of visual function in circuits of the mammalian retina. Could be involved in the regulation of both the cell cycle and apoptosis in prostate cancer cells. Involved in craniofacial and gonadal development. Modulates the migration of progenitor cell populations in branchial arches and gonads by repressing CXCL12. The sequence is that of Iroquois-class homeodomain protein IRX-5 (IRX5) from Homo sapiens (Human).